A 652-amino-acid chain; its full sequence is Translation factor guf1, mitochondrial (652 aa).

The N-terminal 44 residues, 1-44, are a transit peptide targeting the mitochondrion; that stretch reads MSIFRLSRTFSLETCLKSSSFKIRWRFFSVSYASRKLASEDNKP. One can recognise a tr-type G domain in the interval 56-237; sequence NRVRNWAVIA…EIIQKIPPPK (182 aa). Residues 65 to 72, 130 to 134, and 184 to 187 contribute to the GTP site; these read AHIDHGKS, DTPGH, and NKVD.

It belongs to the TRAFAC class translation factor GTPase superfamily. Classic translation factor GTPase family. LepA subfamily.

It is found in the mitochondrion inner membrane. It catalyses the reaction GTP + H2O = GDP + phosphate + H(+). Its function is as follows. Promotes mitochondrial protein synthesis. May act as a fidelity factor of the translation reaction, by catalyzing a one-codon backward translocation of tRNAs on improperly translocated ribosomes. Binds to mitochondrial ribosomes in a GTP-dependent manner. This is Translation factor guf1, mitochondrial (guf1) from Schizosaccharomyces pombe (strain 972 / ATCC 24843) (Fission yeast).